Here is a 364-residue protein sequence, read N- to C-terminus: UDP-N-acetylglucosamine--N-acetylmuramyl-(pentapeptide) pyrophosphoryl-undecaprenol N-acetylglucosamine transferase (364 aa).

UDP-N-acetyl-alpha-D-glucosamine is bound by residues 10-12 (TGG), N124, R166, S196, and Q297.

Belongs to the glycosyltransferase 28 family. MurG subfamily.

The protein localises to the cell membrane. The enzyme catalyses di-trans,octa-cis-undecaprenyl diphospho-N-acetyl-alpha-D-muramoyl-L-alanyl-D-glutamyl-meso-2,6-diaminopimeloyl-D-alanyl-D-alanine + UDP-N-acetyl-alpha-D-glucosamine = di-trans,octa-cis-undecaprenyl diphospho-[N-acetyl-alpha-D-glucosaminyl-(1-&gt;4)]-N-acetyl-alpha-D-muramoyl-L-alanyl-D-glutamyl-meso-2,6-diaminopimeloyl-D-alanyl-D-alanine + UDP + H(+). It participates in cell wall biogenesis; peptidoglycan biosynthesis. In terms of biological role, cell wall formation. Catalyzes the transfer of a GlcNAc subunit on undecaprenyl-pyrophosphoryl-MurNAc-pentapeptide (lipid intermediate I) to form undecaprenyl-pyrophosphoryl-MurNAc-(pentapeptide)GlcNAc (lipid intermediate II). This Caldanaerobacter subterraneus subsp. tengcongensis (strain DSM 15242 / JCM 11007 / NBRC 100824 / MB4) (Thermoanaerobacter tengcongensis) protein is UDP-N-acetylglucosamine--N-acetylmuramyl-(pentapeptide) pyrophosphoryl-undecaprenol N-acetylglucosamine transferase.